The following is a 315-amino-acid chain: Tyrosine recombinase XerC (315 aa).

The region spanning 14–105 (PDLLNERQSW…GLRSLLHHLQ (92 aa)) is the Core-binding (CB) domain. Residues 126–309 (SLPKPLTDRQ…DTARLLEIYD (184 aa)) form the Tyr recombinase domain. Catalysis depends on residues Arg169, Lys193, His261, Arg264, and His287. The active-site O-(3'-phospho-DNA)-tyrosine intermediate is the Tyr296.

Belongs to the 'phage' integrase family. XerC subfamily. Forms a cyclic heterotetrameric complex composed of two molecules of XerC and two molecules of XerD.

It is found in the cytoplasm. Site-specific tyrosine recombinase, which acts by catalyzing the cutting and rejoining of the recombining DNA molecules. The XerC-XerD complex is essential to convert dimers of the bacterial chromosome into monomers to permit their segregation at cell division. It also contributes to the segregational stability of plasmids. The polypeptide is Tyrosine recombinase XerC (Agrobacterium fabrum (strain C58 / ATCC 33970) (Agrobacterium tumefaciens (strain C58))).